Consider the following 399-residue polypeptide: STOREKEEPER protein (399 aa).

Disordered regions lie at residues 1-160 and 250-301; these read MAPK…RSLW and GISN…EEQQ. Over residues 20 to 54 the composition is skewed to acidic residues; the sequence is EEQELVEESQEEEEQQSREEEGEEESGEETEEDEE. Polar residues predominate over residues 69-79; sequence KLVQTPQKPQF. Composition is skewed to low complexity over residues 80–100 and 116–125; these read SSES…SGNS and AAKAATPSKP. Composition is skewed to basic and acidic residues over residues 143-152 and 270-299; these read KIAEEEEKKS and KTVE…KEEE.

The protein belongs to the GeBP family. In terms of tissue distribution, expressed in tubers and in leaves treated with sucrose.

It localises to the nucleus. May act as a transcriptional regulator. Binds specifically to the B-box motif, a promoter element that is required for the tuber-specific and sucrose inducible expression of the patatin gene. This is STOREKEEPER protein from Solanum tuberosum (Potato).